Here is a 150-residue protein sequence, read N- to C-terminus: Small ribosomal subunit protein uS19y (150 aa).

It belongs to the universal ribosomal protein uS19 family.

The protein resides in the cytoplasm. The chain is Small ribosomal subunit protein uS19y (RPS15C) from Arabidopsis thaliana (Mouse-ear cress).